We begin with the raw amino-acid sequence, 1479 residues long: DNA-directed RNA polymerase subunit beta'' (1479 aa).

The Zn(2+) site is built by cysteine 220, cysteine 296, cysteine 303, and cysteine 306. Disordered stretches follow at residues 618–640 (TRAEDSEEEYETLEDEYRTREDE) and 663–756 (LEDE…KKEG). Acidic residues-rich tracts occupy residues 622–631 (DSEEEYETLE), 704–717 (DEYGTIEEDSEDEY), and 731–749 (LEEDSEEDSEDEYESPEED).

The protein belongs to the RNA polymerase beta' chain family. RpoC2 subfamily. As to quaternary structure, in plastids the minimal PEP RNA polymerase catalytic core is composed of four subunits: alpha, beta, beta', and beta''. When a (nuclear-encoded) sigma factor is associated with the core the holoenzyme is formed, which can initiate transcription. It depends on Zn(2+) as a cofactor.

The protein resides in the plastid. The protein localises to the chloroplast. The enzyme catalyses RNA(n) + a ribonucleoside 5'-triphosphate = RNA(n+1) + diphosphate. In terms of biological role, DNA-dependent RNA polymerase catalyzes the transcription of DNA into RNA using the four ribonucleoside triphosphates as substrates. The protein is DNA-directed RNA polymerase subunit beta'' of Triticum aestivum (Wheat).